The following is a 120-amino-acid chain: Large ribosomal subunit protein bL12 (120 aa).

The protein belongs to the bacterial ribosomal protein bL12 family. In terms of assembly, homodimer. Part of the ribosomal stalk of the 50S ribosomal subunit. Forms a multimeric L10(L12)X complex, where L10 forms an elongated spine to which 2 to 4 L12 dimers bind in a sequential fashion. Binds GTP-bound translation factors.

Forms part of the ribosomal stalk which helps the ribosome interact with GTP-bound translation factors. Is thus essential for accurate translation. This is Large ribosomal subunit protein bL12 from Pseudoalteromonas translucida (strain TAC 125).